The primary structure comprises 202 residues: Urease accessory protein UreE (202 aa).

A disordered region spans residues 138–202 (RGAYHSHGGH…HGHHHGHKHD (65 aa)). Basic and acidic residues predominate over residues 147–193 (HSHDHGHAAHDHGHAAHDHGHNHDHDHGHAHGHDHQHDHNCDHDHDH).

Belongs to the UreE family.

It localises to the cytoplasm. Involved in urease metallocenter assembly. Binds nickel. Probably functions as a nickel donor during metallocenter assembly. This chain is Urease accessory protein UreE, found in Rhizobium etli (strain CIAT 652).